The following is a 196-amino-acid chain: N-(5'-phosphoribosyl)anthranilate isomerase (196 aa).

The protein belongs to the TrpF family.

It carries out the reaction N-(5-phospho-beta-D-ribosyl)anthranilate = 1-(2-carboxyphenylamino)-1-deoxy-D-ribulose 5-phosphate. Its pathway is amino-acid biosynthesis; L-tryptophan biosynthesis; L-tryptophan from chorismate: step 3/5. This is N-(5'-phosphoribosyl)anthranilate isomerase from Sulfurovum sp. (strain NBC37-1).